Consider the following 276-residue polypeptide: Large ribosomal subunit protein uL2 (276 aa).

Disordered regions lie at residues 1-61 (MALK…HKQK) and 224-276 (AMNP…KKKN). The segment covering 15 to 31 (GRIDLRKDEITAQKPEK) has biased composition (basic and acidic residues).

This sequence belongs to the universal ribosomal protein uL2 family. As to quaternary structure, part of the 50S ribosomal subunit. Forms a bridge to the 30S subunit in the 70S ribosome.

One of the primary rRNA binding proteins. Required for association of the 30S and 50S subunits to form the 70S ribosome, for tRNA binding and peptide bond formation. It has been suggested to have peptidyltransferase activity; this is somewhat controversial. Makes several contacts with the 16S rRNA in the 70S ribosome. The chain is Large ribosomal subunit protein uL2 from Treponema denticola (strain ATCC 35405 / DSM 14222 / CIP 103919 / JCM 8153 / KCTC 15104).